Here is a 401-residue protein sequence, read N- to C-terminus: Type 3 secretion system translocon protein SctE (401 aa).

Positions 129 to 160 form a coiled coil; sequence IQRLHEQNMKKIEENQEKIKETEENAKQVKKS. Transmembrane regions (helical) follow at residues 166–186 and 225–245; these read IFGW…VASG and LGPI…VMTF. Residues 345–379 are a coiled coil; it reads LALNKADMAALQSIIDRLKEELSHLSESHRQVMEL.

It belongs to the SctE/SipB/YopB family. The core secretion machinery of the T3SS is composed of approximately 20 different proteins, including cytoplasmic components, a base, an export apparatus and a needle. This subunit is involved in the formation of a pore, called the translocon, in host membrane. Interacts with YopD/SctB. Together with YopD/SctB, forms a multimeric integral membrane complex with a mass of between 500 and 700 kDa.

The protein resides in the secreted. It localises to the host membrane. Component of the type III secretion system (T3SS), also called injectisome, which is used to inject bacterial effector proteins into eukaryotic host cells. YopB/SctE and YopD/SctB are inserted into the host membrane where they form a pore and allow the translocation of effector proteins into the cytosol of target cells. Is an essential virulence determinant. Required for YopE translocation. In terms of biological role, essential for the establishment of Yersinia infections in a mouse model system, but not for the targeting of effector Yops. May modulate the host's immune response at a distance from the site of infection. This Yersinia enterocolitica protein is Type 3 secretion system translocon protein SctE.